Consider the following 309-residue polypeptide: Sulfur oxygenase/reductase (309 aa).

A Cysteine persulfide modification is found at Cys31. Residues His86, His90, and Glu114 each coordinate Fe cation.

Homoicosatetramer. The resulting structure is a hollow sphere where catalysis takes place in the inside cavity. It depends on Fe cation as a cofactor.

Its subcellular location is the cytoplasm. The catalysed reaction is 4 sulfur + O2 + 4 H2O = 2 hydrogen sulfide + 2 sulfite + 6 H(+). Its activity is regulated as follows. Inhibited by zinc. In terms of biological role, catalyzes the simultaneous oxidation and reduction of elemental sulfur in the presence of oxygen, with sulfite and hydrogen sulfide as products. The chain is Sulfur oxygenase/reductase (sor) from Acidianus ambivalens (Desulfurolobus ambivalens).